The chain runs to 237 residues: 2-C-methyl-D-erythritol 4-phosphate cytidylyltransferase (237 aa).

It belongs to the IspD/TarI cytidylyltransferase family. IspD subfamily.

It catalyses the reaction 2-C-methyl-D-erythritol 4-phosphate + CTP + H(+) = 4-CDP-2-C-methyl-D-erythritol + diphosphate. It participates in isoprenoid biosynthesis; isopentenyl diphosphate biosynthesis via DXP pathway; isopentenyl diphosphate from 1-deoxy-D-xylulose 5-phosphate: step 2/6. Its function is as follows. Catalyzes the formation of 4-diphosphocytidyl-2-C-methyl-D-erythritol from CTP and 2-C-methyl-D-erythritol 4-phosphate (MEP). The sequence is that of 2-C-methyl-D-erythritol 4-phosphate cytidylyltransferase from Paraburkholderia xenovorans (strain LB400).